We begin with the raw amino-acid sequence, 158 residues long: Small ribosomal subunit protein bS6 (158 aa).

A compositionally biased stretch (basic and acidic residues) spans 92–149 (RVDEHEEGPSAMMRKADRDRERDDRGPREGGFRGDREGRGDRDGFRGDRGPRRPREDA). Residues 92–158 (RVDEHEEGPS…ADAPAAAVEE (67 aa)) form a disordered region.

It belongs to the bacterial ribosomal protein bS6 family.

Its function is as follows. Binds together with bS18 to 16S ribosomal RNA. This is Small ribosomal subunit protein bS6 from Rhodopseudomonas palustris (strain ATCC BAA-98 / CGA009).